A 148-amino-acid polypeptide reads, in one-letter code: UPF0756 membrane protein YeaL (148 aa).

Transmembrane regions (helical) follow at residues Ala14 to Val34, Leu51 to Leu71, Leu86 to Met106, and Val121 to Val141.

Belongs to the UPF0756 family.

Its subcellular location is the cell membrane. This Shigella dysenteriae serotype 1 (strain Sd197) protein is UPF0756 membrane protein YeaL.